The primary structure comprises 146 residues: DNA utilization protein HofO (146 aa).

A helical membrane pass occupies residues Trp-20 to His-37.

Its subcellular location is the cell inner membrane. Its function is as follows. Required for the use of extracellular DNA as a nutrient. The polypeptide is DNA utilization protein HofO (hofO) (Escherichia coli (strain K12)).